The sequence spans 157 residues: MSRKSKKIKKKVFKDSKYDSQVIAKFVNRMMYDGKKSISEAIVYNSIDLLAEKTEEVDKVAAFSKALDNVKPLVEVRSRRVGGATYQVPVEVREERREALAMKWIIAAARKASGKSMQEKLGNELVNSYNSTGVAFKKREDTHRMAEANRAFTHYRW.

This sequence belongs to the universal ribosomal protein uS7 family. In terms of assembly, part of the 30S ribosomal subunit. Contacts proteins S9 and S11.

Functionally, one of the primary rRNA binding proteins, it binds directly to 16S rRNA where it nucleates assembly of the head domain of the 30S subunit. Is located at the subunit interface close to the decoding center, probably blocks exit of the E-site tRNA. This chain is Small ribosomal subunit protein uS7, found in Borrelia turicatae (strain 91E135).